We begin with the raw amino-acid sequence, 151 residues long: Probable cGMP 3',5'-cyclic phosphodiesterase subunit delta (151 aa).

This sequence belongs to the PDE6D/unc-119 family. As to quaternary structure, interacts with Pde6.

It localises to the nucleus. It is found in the cytoplasm. This chain is Probable cGMP 3',5'-cyclic phosphodiesterase subunit delta, found in Aedes aegypti (Yellowfever mosquito).